Reading from the N-terminus, the 322-residue chain is Cytochrome f (322 aa).

An N-terminal signal peptide occupies residues 1–37; that stretch reads MQNRKTYAYDWIKKWMIKSISTLIIINTMVWSSVSEA. Positions 38, 58, 61, and 62 each coordinate heme. Residues 285 to 307 traverse the membrane as a helical segment; it reads VLRVQGLLLFFASVILAQIFLVL.

This sequence belongs to the cytochrome f family. In terms of assembly, the 4 large subunits of the cytochrome b6-f complex are cytochrome b6, subunit IV (17 kDa polypeptide, petD), cytochrome f and the Rieske protein, while the 4 small subunits are PetG, PetL, PetM and PetN. The complex functions as a dimer. The cofactor is heme.

The protein resides in the plastid. It is found in the chloroplast thylakoid membrane. In terms of biological role, component of the cytochrome b6-f complex, which mediates electron transfer between photosystem II (PSII) and photosystem I (PSI), cyclic electron flow around PSI, and state transitions. In Anthoceros angustus (Hornwort), this protein is Cytochrome f (petA).